We begin with the raw amino-acid sequence, 333 residues long: Threonine-phosphate decarboxylase (333 aa).

The residue at position 199 (Lys199) is an N6-(pyridoxal phosphate)lysine.

Belongs to the class-I pyridoxal-phosphate-dependent aminotransferase family. In terms of assembly, homodimer. Pyridoxal 5'-phosphate serves as cofactor.

It localises to the cytoplasm. The catalysed reaction is O-phospho-L-threonine + H(+) = (R)-1-aminopropan-2-yl phosphate + CO2. It functions in the pathway cofactor biosynthesis; adenosylcobalamin biosynthesis. In terms of biological role, decarboxylates L-threonine-O-3-phosphate to yield (R)-1-amino-2-propanol O-2-phosphate, the precursor for the linkage between the nucleotide loop and the corrin ring in cobalamin. The polypeptide is Threonine-phosphate decarboxylase (cobC) (Sinorhizobium sp).